We begin with the raw amino-acid sequence, 114 residues long: uncharacterized protein (114 aa).

Residues 13-99 (YYAVIFSSVK…VWYESYAVRV (87 aa)) form the ABM domain.

This is an uncharacterized protein from Bacillus subtilis (strain 168).